Here is a 398-residue protein sequence, read N- to C-terminus: Elongation factor Tu (398 aa).

A tr-type G domain is found at 10-207 (KPHVNIGTIG…TVDEYIPEPE (198 aa)). The interval 19 to 26 (GHVDHGKT) is G1. Residue 19–26 (GHVDHGKT) coordinates GTP. Residue threonine 26 coordinates Mg(2+). Residues 63-67 (GITIN) are G2. Residues 84–87 (DAPG) form a G3 region. GTP-binding positions include 84–88 (DAPGH) and 139–142 (NKVD). Positions 139–142 (NKVD) are G4. The G5 stretch occupies residues 177–179 (SAL).

This sequence belongs to the TRAFAC class translation factor GTPase superfamily. Classic translation factor GTPase family. EF-Tu/EF-1A subfamily. As to quaternary structure, monomer.

Its subcellular location is the cytoplasm. It carries out the reaction GTP + H2O = GDP + phosphate + H(+). In terms of biological role, GTP hydrolase that promotes the GTP-dependent binding of aminoacyl-tRNA to the A-site of ribosomes during protein biosynthesis. This is Elongation factor Tu from Streptococcus sanguinis (strain SK36).